The primary structure comprises 630 residues: MPILTIREVCNINHWGIGYYDVDDSGEIIVRPNPSQHNQTVSLQKLTEAVQQKHQARLPVLFCFPQILEHRLRDINRAFQTAREECGYKGGYCLVYPIKVNQHRRVIESLMSSGQPHGLEAGSKAELMAVLAHAGNRQTLIVCNGYKDREYIRFALMGEKLGHQVYLVIEKLSEIQMVLEEAEKLGIKPRLGVRARLASQGSGKWQSSGGEKSKFGLSASQVLQLVDILKQKNRLDCLQLLHFHLGSQLGNIRDVATGVHESARFYVELHKLGVNIRCFDVGGGLGVDYEGNRTQSDCSVNYSLNEYAATVVWGISQACLEHGLPHPTIITESGRGITAHHAVLVANVIGVERYKPRRLDAPSPEAPRVLHSMWETWTDISASREKRSLRSWIHEGQFDLADVHNQYNVGLLSLAQRAWAEQLYLNICHEVGELFNEKHRSHRTIIDELQERFADKLYVNFSLFQSLPDAWGIDQLFPVCPITGLNEPIARRAVLLDITCDSDGTIDHYIDGDGIAGTMPMPDYPEEEPPLLGFFMVGAYQEILGNMHNLFGDTATADVVVGEDGQFTVIDYDEGNTVADMLEYVYQDPKELMKRYREQIEHSDLPASQAMSFLKELEAGLNGYTYLEDE.

Position 99 is an N6-(pyridoxal phosphate)lysine (lysine 99). 279 to 289 (FDVGGGLGVDY) serves as a coordination point for substrate.

It belongs to the Orn/Lys/Arg decarboxylase class-II family. SpeA subfamily. Requires Mg(2+) as cofactor. Pyridoxal 5'-phosphate is required as a cofactor.

It carries out the reaction L-arginine + H(+) = agmatine + CO2. It participates in amine and polyamine biosynthesis; agmatine biosynthesis; agmatine from L-arginine: step 1/1. Its function is as follows. Catalyzes the biosynthesis of agmatine from arginine. The sequence is that of Biosynthetic arginine decarboxylase from Neisseria meningitidis serogroup B (strain ATCC BAA-335 / MC58).